The following is a 538-amino-acid chain: ATP-dependent rRNA helicase RRP3 (538 aa).

Over residues 1–11 (MSSAKRVKLSH) the composition is skewed to basic residues. A disordered region spans residues 1–112 (MSSAKRVKLS…SKEETPTKSF (112 aa)). Residues 34–47 (KKITQAPKAAAPIK) are compositionally biased toward low complexity. The span at 53–85 (AEEDDDDDDKDDKDEEDEEQNDDSSDEASENDD) shows a compositional bias: acidic residues. Over residues 92-112 (EATKEGQTELPSKEETPTKSF) the composition is skewed to basic and acidic residues. The short motif at 110-138 (KSFRDLGIVEPLCEACEALKFKKPTPIQE) is the Q motif element. Residues 141–312 (IPLALQGRDV…RASLRDPLKV (172 aa)) enclose the Helicase ATP-binding domain. 154-161 (AETGSGKT) contacts ATP. The DEAD box motif lies at 260–263 (DEAD). The region spanning 336–486 (HKDVYLIYLA…LFQPDKEEVM (151 aa)) is the Helicase C-terminal domain. The segment covering 498 to 512 (HAREEMKALHEDRGK) has biased composition (basic and acidic residues). Residues 498–538 (HAREEMKALHEDRGKKGAVLKGRKRGSATKRRHDDMDAEEG) form a disordered region. Residues 513–528 (KGAVLKGRKRGSATKR) show a composition bias toward basic residues.

Belongs to the DEAD box helicase family. DDX47/RRP3 subfamily. Interacts with the SSU processome.

The protein resides in the nucleus. It catalyses the reaction ATP + H2O = ADP + phosphate + H(+). Its function is as follows. ATP-dependent rRNA helicase required for pre-ribosomal RNA processing. Involved in the maturation of the 35S-pre-rRNA and to its cleavage to mature 18S rRNA. The polypeptide is ATP-dependent rRNA helicase RRP3 (Pyricularia oryzae (strain 70-15 / ATCC MYA-4617 / FGSC 8958) (Rice blast fungus)).